Consider the following 178-residue polypeptide: Photosystem II extrinsic protein V (178 aa).

Positions 1 to 38 (MFSKFFSLQKAFAAARRRLLILILVLGMAGYAWGPALA) are cleaved as a signal peptide. Heme c-binding residues include C71, C74, H75, and H126.

Belongs to the cytochrome c family. PsbV subfamily. PSII is composed of 1 copy each of membrane proteins PsbA, PsbB, PsbC, PsbD, PsbE, PsbF, PsbH, PsbI, PsbJ, PsbK, PsbL, PsbM, PsbT, PsbX, PsbY, PsbZ, Psb30/Ycf12, peripheral proteins PsbO, CyanoQ (PsbQ), PsbU, PsbV and a large number of cofactors. It forms dimeric complexes. Heme c serves as cofactor.

The protein localises to the cellular thylakoid membrane. Its function is as follows. One of the extrinsic, lumenal subunits of photosystem II (PSII). PSII is a light-driven water plastoquinone oxidoreductase, using light energy to abstract electrons from H(2)O, generating a proton gradient subsequently used for ATP formation. The extrinsic proteins stabilize the structure of photosystem II oxygen-evolving complex (OEC), the ion environment of oxygen evolution and protect the OEC against heat-induced inactivation. Low-potential cytochrome c that plays a role in the OEC of PSII. In Synechococcus sp. (strain JA-3-3Ab) (Cyanobacteria bacterium Yellowstone A-Prime), this protein is Photosystem II extrinsic protein V.